We begin with the raw amino-acid sequence, 407 residues long: Arrestin domain-containing protein 2 (407 aa).

Belongs to the arrestin family. As to quaternary structure, interacts with WWP1 (via WW domains).

The protein is Arrestin domain-containing protein 2 (ARRDC2) of Homo sapiens (Human).